Reading from the N-terminus, the 86-residue chain is UPF0297 protein LCABL_08470 (86 aa).

This sequence belongs to the UPF0297 family.

The protein is UPF0297 protein LCABL_08470 of Lacticaseibacillus casei (strain BL23) (Lactobacillus casei).